A 144-amino-acid chain; its full sequence is Large ribosomal subunit protein uL15 (144 aa).

The interval M1–G53 is disordered. Residues R21–G31 show a composition bias toward gly residues.

This sequence belongs to the universal ribosomal protein uL15 family. In terms of assembly, part of the 50S ribosomal subunit.

Binds to the 23S rRNA. This chain is Large ribosomal subunit protein uL15, found in Erwinia tasmaniensis (strain DSM 17950 / CFBP 7177 / CIP 109463 / NCPPB 4357 / Et1/99).